Reading from the N-terminus, the 371-residue chain is RNA-binding protein 48 (371 aa).

In terms of domain architecture, RRM spans Gln46–Glu124. 2 disordered regions span residues Lys157 to Pro191 and Val348 to Ile371. Positions Pro158–Gln170 are enriched in basic and acidic residues.

It belongs to the RBM48 family. As to quaternary structure, component of the minor spliceosome. Within this complex, interacts with ARMC7 and PRPF8/PRP8.

As a component of the minor spliceosome, involved in the splicing of U12-type introns in pre-mRNAs. The protein is RNA-binding protein 48 (Rbm48) of Mus musculus (Mouse).